The primary structure comprises 316 residues: PAK4-inhibitor inka1 (316 aa).

The tract at residues 108–130 (YSEVSGSSLRGEEDDIVEEESET) is disordered. Acidic residues predominate over residues 119–128 (EEDDIVEEES). 2 inka box regions span residues 182 to 219 (DSQD…DLPE) and 289 to 316 (SDIA…AGFL).

Belongs to the INKA family. Interacts with pak4/pak5.

It is found in the nucleus. The protein localises to the cytoplasm. Its function is as follows. Inhibitor of the serine/threonine-protein kinase pak4/pak5. Acts by binding pak4/pak5 in a substrate-like manner, inhibiting the protein kinase activity. Required for the proper migration of neural crest cells during embryonic development, probably by inhibiting pak4/pak5. The sequence is that of PAK4-inhibitor inka1 from Xenopus laevis (African clawed frog).